The primary structure comprises 103 residues: Small ribosomal subunit protein uS10 (103 aa).

Belongs to the universal ribosomal protein uS10 family. Part of the 30S ribosomal subunit.

Involved in the binding of tRNA to the ribosomes. The protein is Small ribosomal subunit protein uS10 of Escherichia coli O127:H6 (strain E2348/69 / EPEC).